We begin with the raw amino-acid sequence, 144 residues long: FK506-binding protein 2 (144 aa).

An N-terminal signal peptide occupies residues 1-20; that stretch reads MARIIVLIVAFMALIAGVFA. The 89-residue stretch at 48–136 folds into the PPIase FKBP-type domain; sequence GDTVSVHYTG…IFTTELVSID (89 aa). The Prevents secretion from ER signature appears at 141 to 144; sequence RDEL.

The protein belongs to the FKBP-type PPIase family. FKBP2 subfamily.

The protein localises to the endoplasmic reticulum. The catalysed reaction is [protein]-peptidylproline (omega=180) = [protein]-peptidylproline (omega=0). With respect to regulation, inhibited by both FK506 and rapamycin. Its function is as follows. PPIases accelerate the folding of proteins. It catalyzes the cis-trans isomerization of proline imidic peptide bonds in oligopeptides. The protein is FK506-binding protein 2 (FPR2) of Yarrowia lipolytica (strain CLIB 122 / E 150) (Yeast).